Here is a 186-residue protein sequence, read N- to C-terminus: Thiol:disulfide interchange protein CycY (186 aa).

The signal sequence occupies residues 1 to 20; that stretch reads MGRYTLALLPLIVFGGIAHG. In terms of domain architecture, Thioredoxin spans 47-182; sequence DAEPAAARRA…LVPAMEKALG (136 aa). A disulfide bond links C80 and C83.

It belongs to the thioredoxin family. DsbE subfamily.

The protein resides in the periplasm. Required for disulfide bond formation in some periplasmic proteins. Also acts as a disulfide oxidoreductase in cytochromes c biogenesis. The cysteines of apocytochromes c must be in the reduced state for covalent linkage between the two moieties to occur. The sequence is that of Thiol:disulfide interchange protein CycY (cycY) from Rhizobium leguminosarum bv. viciae.